We begin with the raw amino-acid sequence, 191 residues long: MGKKLVMAQRRGETRALCLGVAMVVGAVITYYILGTTVLPLYQKSVWTQESTCHLIETNIRDQEELEGKRVPQYPCLWVNVSSVGRWAVLYHTEDTRDQNHQCSYIPSSLDNYQVARADVEKVRARFHENQDFFCFSTTRENETSVLYRRLYGPQSLLFSLFWPTFLLTGGLLIIVMVKINQSLSILAAQR.

Topologically, residues 2-18 are cytoplasmic; it reads GKKLVMAQRRGETRALC. Residues 19-39 form a helical membrane-spanning segment; the sequence is LGVAMVVGAVITYYILGTTVL. Topologically, residues 40 to 157 are extracellular; the sequence is PLYQKSVWTQ…YRRLYGPQSL (118 aa). Asparagine 80 and asparagine 142 each carry an N-linked (GlcNAc...) asparagine glycan. A helical membrane pass occupies residues 158-178; the sequence is LFSLFWPTFLLTGGLLIIVMV. Residues 179–191 lie on the Cytoplasmic side of the membrane; sequence KINQSLSILAAQR.

The protein belongs to the KCNMB (TC 8.A.14.1) family. KCNMB1 subfamily. In terms of assembly, interacts with KCNMA1 tetramer. There are probably 4 molecules of KCMNB1 per KCNMA1 tetramer. Post-translationally, N-glycosylated.

It localises to the membrane. In terms of biological role, regulatory subunit of the calcium activated potassium KCNMA1 (maxiK) channel. Modulates the calcium sensitivity and gating kinetics of KCNMA1, thereby contributing to KCNMA1 channel diversity. Increases the apparent Ca(2+)/voltage sensitivity of the KCNMA1 channel. It also modifies KCNMA1 channel kinetics and alters its pharmacological properties. It slows down the activation and the deactivation kinetics of the channel. Acts as a negative regulator of smooth muscle contraction by enhancing the calcium sensitivity to KCNMA1. Its presence is also a requirement for internal binding of the KCNMA1 channel opener dehydrosoyasaponin I (DHS-1) triterpene glycoside and for external binding of the agonist hormone 17-beta-estradiol (E2). Increases the binding activity of charybdotoxin (CTX) toxin to KCNMA1 peptide blocker by increasing the CTX association rate and decreasing the dissociation rate. The chain is Calcium-activated potassium channel subunit beta-1 (KCNMB1) from Bos taurus (Bovine).